We begin with the raw amino-acid sequence, 42 residues long: GDWGTCSWPGQECEHDSDCCGSFCCVGRRCLHIYFPCNLSRS.

4 cysteine pairs are disulfide-bonded: Cys6–Cys20, Cys13–Cys25, Cys19–Cys30, and Cys24–Cys37.

The protein belongs to the conotoxin I1 superfamily. Expressed by the venom duct.

Its subcellular location is the secreted. In Conus aulicus (Princely cone), this protein is Conotoxin Au11.6.